The primary structure comprises 1037 residues: Sentrin-specific protease 7 (1037 aa).

Positions 1–10 (MDRARPGRRR) are enriched in basic residues. Disordered regions lie at residues 1–28 (MDRA…SPAD) and 182–420 (ASLS…SEEN). S12, S13, S25, and S189 each carry phosphoserine. Polar residues-rich tracts occupy residues 182–211 (ASLS…NVNH) and 253–263 (TPQSKDFNSGN). Over residues 289–299 (VSRKRKKRGRS) the composition is skewed to basic residues. The span at 300 to 309 (NFHNSHNPKS) shows a compositional bias: polar residues. Composition is skewed to basic and acidic residues over residues 310–320 (SVDKSTEYIKE) and 330–340 (KLEESNEDSHQ). Positions 381–399 (NKSSESSVSSEVAENSSAA) are enriched in low complexity. 2 positions are modified to phosphoserine: S432 and S433. Residues 747–1037 (LGVTNEDLEC…HLQQQKGSSS (291 aa)) are protease. Residue H847 is part of the active site. The interval 873–910 (EFQDQQSQHDNKTIDNDPHTTSTVFTSAEESQSTETSM) is disordered. A compositionally biased stretch (basic and acidic residues) spans 879–890 (SQHDNKTIDNDP). Positions 898 to 910 (TSAEESQSTETSM) are enriched in low complexity. The active site involves D926. The Nucleophile role is filled by C979.

Belongs to the peptidase C48 family.

It is found in the cytoplasm. Protease that acts as a positive regulator of the cGAS-STING pathway by catalyzing desumoylation of CGAS. Desumoylation of CGAS promotes DNA-binding activity of CGAS, subsequent oligomerization and activation. Deconjugates SUMO2 and SUMO3 from targeted proteins, but not SUMO1. Catalyzes the deconjugation of poly-SUMO2 and poly-SUMO3 chains. Has very low efficiency in processing full-length SUMO proteins to their mature forms. The chain is Sentrin-specific protease 7 (Senp7) from Rattus norvegicus (Rat).